The primary structure comprises 425 residues: Serine--tRNA ligase (425 aa).

Position 230 to 232 (230 to 232 (TAE)) interacts with L-serine. 261-263 (RSE) serves as a coordination point for ATP. Residue glutamate 284 participates in L-serine binding. Residue 348-351 (EISS) participates in ATP binding. Serine 384 is an L-serine binding site.

It belongs to the class-II aminoacyl-tRNA synthetase family. Type-1 seryl-tRNA synthetase subfamily. As to quaternary structure, homodimer. The tRNA molecule binds across the dimer.

The protein localises to the cytoplasm. It catalyses the reaction tRNA(Ser) + L-serine + ATP = L-seryl-tRNA(Ser) + AMP + diphosphate + H(+). The catalysed reaction is tRNA(Sec) + L-serine + ATP = L-seryl-tRNA(Sec) + AMP + diphosphate + H(+). Its pathway is aminoacyl-tRNA biosynthesis; selenocysteinyl-tRNA(Sec) biosynthesis; L-seryl-tRNA(Sec) from L-serine and tRNA(Sec): step 1/1. Its function is as follows. Catalyzes the attachment of serine to tRNA(Ser). Is also able to aminoacylate tRNA(Sec) with serine, to form the misacylated tRNA L-seryl-tRNA(Sec), which will be further converted into selenocysteinyl-tRNA(Sec). This Streptococcus gordonii (strain Challis / ATCC 35105 / BCRC 15272 / CH1 / DL1 / V288) protein is Serine--tRNA ligase.